The chain runs to 506 residues: Maturase K (506 aa).

It belongs to the intron maturase 2 family. MatK subfamily.

Its subcellular location is the plastid. It is found in the chloroplast. Functionally, usually encoded in the trnK tRNA gene intron. Probably assists in splicing its own and other chloroplast group II introns. In Lathyrus aphaca (Yellow vetchling), this protein is Maturase K.